The primary structure comprises 387 residues: Alpha-sarcoglycan (387 aa).

The N-terminal stretch at 1–23 (MAATLTWILLFVGLLAGLRDTKA) is a signal peptide. The Extracellular segment spans residues 24–290 (QQTTLYPLVG…ATGRDFLADA (267 aa)). Residues Asn174 and Asn246 are each glycosylated (N-linked (GlcNAc...) asparagine). Residues 291–311 (LVTLLVPLLVALLLTLLLAYI) form a helical membrane-spanning segment. Topologically, residues 312–387 (MCCRREGQLK…AQVPLILDQH (76 aa)) are cytoplasmic. A Phosphoserine modification is found at Ser377.

It belongs to the sarcoglycan alpha/epsilon family. In terms of assembly, interacts with the syntrophin SNTA1. Cross-link to form 2 major subcomplexes: one consisting of SGCB, SGCD and SGCG and the other consisting of SGCB and SGCD. The association between SGCB and SGCG is particularly strong while SGCA is loosely associated with the other sarcoglycans. In terms of tissue distribution, strongly expressed in skeletal and heart muscle.

The protein localises to the cell membrane. It localises to the sarcolemma. Its subcellular location is the cytoplasm. It is found in the cytoskeleton. In terms of biological role, component of the sarcoglycan complex, a subcomplex of the dystrophin-glycoprotein complex which forms a link between the F-actin cytoskeleton and the extracellular matrix. The polypeptide is Alpha-sarcoglycan (SGCA) (Mesocricetus auratus (Golden hamster)).